The primary structure comprises 188 residues: Ribosome-recycling factor (188 aa).

This sequence belongs to the RRF family.

The protein localises to the cytoplasm. Functionally, responsible for the release of ribosomes from messenger RNA at the termination of protein biosynthesis. May increase the efficiency of translation by recycling ribosomes from one round of translation to another. This is Ribosome-recycling factor from Cereibacter sphaeroides (strain ATCC 17029 / ATH 2.4.9) (Rhodobacter sphaeroides).